Consider the following 832-residue polypeptide: MKPPGSSSRQPPLAGCSLAGASCGPQRGPAGSVPASAPARTPPCRLLLVLLLLPPLAASSRPRAWGAAAPSAPHWNETAEKNLGVLADEDNTLQQNSSSNISYSNAMQKEITLPSRLIYYINQDSESPYHVLDTKARHQQKHNKAVHLAQASFQIEAFGSKFILDLILNNGLLSSDYVEIHYENGKPQYSKGGEHCYYHGSIRGVKDSKVALSTCNGLHGMFEDDTFVYMIEPLELVHDEKSTGRPHIIQKTLAGQYSKQMKNLTMERGDQWPFLSELQWLKRRKRAVNPSRGIFEEMKYLELMIVNDHKTYKKHRSSHAHTNNFAKSVVNLVDSIYKEQLNTRVVLVAVETWTEKDQIDITTNPVQMLHEFSKYRQRIKQHADAVHLISRVTFHYKRSSLSYFGGVCSRTRGVGVNEYGLPMAVAQVLSQSLAQNLGIQWEPSSRKPKCDCTESWGGCIMEETGVSHSRKFSKCSILEYRDFLQRGGGACLFNRPTKLFEPTECGNGYVEAGEECDCGFHVECYGLCCKKCSLSNGAHCSDGPCCNNTSCLFQPRGYECRDAVNECDITEYCTGDSGQCPPNLHKQDGYACNQNQGRCYNGECKTRDNQCQYIWGTKAAGSDKFCYEKLNTEGTEKGNCGKDGDRWIQCSKHDVFCGFLLCTNLTRAPRIGQLQGEIIPTSFYHQGRVIDCSGAHVVLDDDTDVGYVEDGTPCGPSMMCLDRKCLQIQALNMSSCPLDSKGKVCSGHGVCSNEATCICDFTWAGTDCSIRDPVRNLHPPKDEGPKGPSATNLIIGSIAGAILVAAIVLGGTGWGFKNVKKRRFDPTQQGPI.

A compositionally biased stretch (polar residues) spans 1 to 10 (MKPPGSSSRQ). A disordered region spans residues 1–37 (MKPPGSSSRQPPLAGCSLAGASCGPQRGPAGSVPASA). The first 59 residues, 1–59 (MKPPGSSSRQPPLAGCSLAGASCGPQRGPAGSVPASAPARTPPCRLLLVLLLLPPLAAS), serve as a signal peptide directing secretion. A compositionally biased stretch (low complexity) spans 28-37 (GPAGSVPASA). Positions 60 to 286 (SRPRAWGAAA…ELQWLKRRKR (227 aa)) are excised as a propeptide. Asparagine 76, asparagine 96, asparagine 100, and asparagine 263 each carry an N-linked (GlcNAc...) asparagine glycan. The Extracellular segment spans residues 287 to 792 (AVNPSRGIFE…EGPKGPSATN (506 aa)). In terms of domain architecture, Peptidase M12B spans 299–496 (KYLELMIVND…GGGACLFNRP (198 aa)). Intrachain disulfides connect cysteine 408/cysteine 491, cysteine 450/cysteine 475, and cysteine 452/cysteine 459. The region spanning 502 to 588 (PTECGNGYVE…QCPPNLHKQD (87 aa)) is the Disintegrin domain. 2 N-linked (GlcNAc...) asparagine glycosylation sites follow: asparagine 547 and asparagine 548. Cysteine 560 and cysteine 580 form a disulfide bridge. Residues 563–568 (AVNECD) are may bind the integrin receptor. N-linked (GlcNAc...) asparagine glycans are attached at residues asparagine 664 and asparagine 732. The 38-residue stretch at 732–769 (NMSSCPLDSKGKVCSGHGVCSNEATCICDFTWAGTDCS) folds into the EGF-like domain. 3 cysteine pairs are disulfide-bonded: cysteine 736/cysteine 751, cysteine 745/cysteine 757, and cysteine 759/cysteine 768. Residues 793–813 (LIIGSIAGAILVAAIVLGGTG) form a helical membrane-spanning segment. The Cytoplasmic portion of the chain corresponds to 814–832 (WGFKNVKKRRFDPTQQGPI).

As to quaternary structure, can bind to LGI1 and LGI4. Ligand for integrin alpha-V/beta-3. As to expression, highly expressed in the brain and weakly expressed in the heart. In the brain, expressed prominently in the amygdala, caudate nucleus, hypothalamus, thalamus, cerebral cortex and occipital pole.

The protein localises to the cell membrane. It localises to the secreted. Functionally, may play a role in cell-cell and cell-matrix interactions. This is a non-catalytic metalloprotease-like protein. This is Disintegrin and metalloproteinase domain-containing protein 23 (ADAM23) from Homo sapiens (Human).